We begin with the raw amino-acid sequence, 336 residues long: MSTPVILALTAGEPAGIGPELCLQLATGSRDAGLVVIASGELLRDRASQLGLQIELHDWQPGVAAATRAGHLSVRHVEGCGSTVAGRLDKANSQYVLDTLTIAARGCLNGDFDGMVTAPVHKGVINEAGIVFSGHTEFLQELCGVERVVMMLATEELRVALVTTHLPLKDVSAAITPDRLTQVTRILNADLKAFFGIDQPRILVAGLNPHAGEGGHLGREEIEVIEPTLEQLRAEGIQLTGPLPADTLFTPHWLDNADAVLAMYHDQGLPVLKFQGFGRAVNITLGLPIVRTSVDHGTALDLAGTGKADAGSLHTAIRVGEQMAQCRKATGAGELS.

Substrate-binding residues include histidine 135 and threonine 136. Residues histidine 165, histidine 210, and histidine 265 each coordinate a divalent metal cation. 3 residues coordinate substrate: lysine 273, asparagine 282, and arginine 291.

The protein belongs to the PdxA family. Homodimer. Requires Zn(2+) as cofactor. The cofactor is Mg(2+). Co(2+) is required as a cofactor.

It localises to the cytoplasm. The enzyme catalyses 4-(phosphooxy)-L-threonine + NAD(+) = 3-amino-2-oxopropyl phosphate + CO2 + NADH. Its pathway is cofactor biosynthesis; pyridoxine 5'-phosphate biosynthesis; pyridoxine 5'-phosphate from D-erythrose 4-phosphate: step 4/5. In terms of biological role, catalyzes the NAD(P)-dependent oxidation of 4-(phosphooxy)-L-threonine (HTP) into 2-amino-3-oxo-4-(phosphooxy)butyric acid which spontaneously decarboxylates to form 3-amino-2-oxopropyl phosphate (AHAP). This chain is 4-hydroxythreonine-4-phosphate dehydrogenase, found in Marinobacter nauticus (strain ATCC 700491 / DSM 11845 / VT8) (Marinobacter aquaeolei).